The chain runs to 447 residues: MIKIKKGLNLPIAGRPEQVIYDGPAITEVALLGEEYVGMRPSMKIKEGEAVKKGQVLFEDKKNPGVVFTAPASGKIAAIHRGEKRVLQSVVIAVEGNDEIEFERYVPEALAKLSSEEVRRNLIQSGLWTALRTRPFSKIPAVDAEPFAIFVNAMDTNPLAADPTVIIKEAAEDFKRGLLVLSRLTERKIHVCKAAGADVPSENAANIETHEFGGPHPAGLSGTHIHFIEPVGANKTVWTINYQDVIAIGRLFVTGRLNTERVVALGGLQVNKPRLLRTVLGAKVSQLTAGELVDADNRVISGSVLNGAIAQGAHDYLGRYHNQISVIEEGRGKELFGWVAPQPDKYSITRTTLGHFLKNKLFKFTTAVNGGDRAMVPIGTYERVMPLDILPTLLLRDLIVGDTDSAQALGCLELDEEDLALCSFVCPGKYEYGPLLRKVLETIEKEG.

Belongs to the NqrA family. In terms of assembly, composed of six subunits; NqrA, NqrB, NqrC, NqrD, NqrE and NqrF.

The catalysed reaction is a ubiquinone + n Na(+)(in) + NADH + H(+) = a ubiquinol + n Na(+)(out) + NAD(+). Its function is as follows. NQR complex catalyzes the reduction of ubiquinone-1 to ubiquinol by two successive reactions, coupled with the transport of Na(+) ions from the cytoplasm to the periplasm. NqrA to NqrE are probably involved in the second step, the conversion of ubisemiquinone to ubiquinol. In Neisseria gonorrhoeae (strain NCCP11945), this protein is Na(+)-translocating NADH-quinone reductase subunit A.